A 333-amino-acid polypeptide reads, in one-letter code: Ketol-acid reductoisomerase (NADP(+)) (333 aa).

Residues 1 to 179 form the KARI N-terminal Rossmann domain; the sequence is MFYDDDADLT…GGTRAGVIKT (179 aa). Residues 22–25, lysine 45, serine 48, serine 50, and 80–83 contribute to the NADP(+) site; these read YGSQ and DTAQ. Histidine 105 is an active-site residue. NADP(+) is bound at residue glycine 131. In terms of domain architecture, KARI C-terminal knotted spans 180 to 325; the sequence is TFKDETETDL…KRLRDLMSWV (146 aa). The Mg(2+) site is built by aspartate 188, glutamate 192, glutamate 224, and glutamate 228. Serine 249 contacts substrate.

It belongs to the ketol-acid reductoisomerase family. The cofactor is Mg(2+).

The enzyme catalyses (2R)-2,3-dihydroxy-3-methylbutanoate + NADP(+) = (2S)-2-acetolactate + NADPH + H(+). It catalyses the reaction (2R,3R)-2,3-dihydroxy-3-methylpentanoate + NADP(+) = (S)-2-ethyl-2-hydroxy-3-oxobutanoate + NADPH + H(+). It functions in the pathway amino-acid biosynthesis; L-isoleucine biosynthesis; L-isoleucine from 2-oxobutanoate: step 2/4. Its pathway is amino-acid biosynthesis; L-valine biosynthesis; L-valine from pyruvate: step 2/4. Functionally, involved in the biosynthesis of branched-chain amino acids (BCAA). Catalyzes an alkyl-migration followed by a ketol-acid reduction of (S)-2-acetolactate (S2AL) to yield (R)-2,3-dihydroxy-isovalerate. In the isomerase reaction, S2AL is rearranged via a Mg-dependent methyl migration to produce 3-hydroxy-3-methyl-2-ketobutyrate (HMKB). In the reductase reaction, this 2-ketoacid undergoes a metal-dependent reduction by NADPH to yield (R)-2,3-dihydroxy-isovalerate. This is Ketol-acid reductoisomerase (NADP(+)) from Mycobacterium avium.